The chain runs to 620 residues: 1-deoxy-D-xylulose-5-phosphate synthase (620 aa).

Residues His80 and 121–123 (GHS) contribute to the thiamine diphosphate site. Asp152 serves as a coordination point for Mg(2+). Residues 153–154 (GA), Asn181, Tyr288, and Glu370 each bind thiamine diphosphate. Mg(2+) is bound at residue Asn181.

This sequence belongs to the transketolase family. DXPS subfamily. In terms of assembly, homodimer. Requires Mg(2+) as cofactor. Thiamine diphosphate is required as a cofactor.

The catalysed reaction is D-glyceraldehyde 3-phosphate + pyruvate + H(+) = 1-deoxy-D-xylulose 5-phosphate + CO2. It functions in the pathway metabolic intermediate biosynthesis; 1-deoxy-D-xylulose 5-phosphate biosynthesis; 1-deoxy-D-xylulose 5-phosphate from D-glyceraldehyde 3-phosphate and pyruvate: step 1/1. Its function is as follows. Catalyzes the acyloin condensation reaction between C atoms 2 and 3 of pyruvate and glyceraldehyde 3-phosphate to yield 1-deoxy-D-xylulose-5-phosphate (DXP). This Citrobacter koseri (strain ATCC BAA-895 / CDC 4225-83 / SGSC4696) protein is 1-deoxy-D-xylulose-5-phosphate synthase.